A 382-amino-acid polypeptide reads, in one-letter code: uncharacterized protein (382 aa).

The next 12 membrane-spanning stretches (helical) occupy residues 14–34 (GLLLLTLAIAVLNTLVPLWLA), 45–65 (VVSSSYFTGNLVGTLLTGYVI), 79–99 (FIFAAGCAGLGLMIGFWSWLA), 102–122 (FVAGVGCAMIWVVVESALMCS), 131–151 (LLAAYMMVYYVGTFLGQLLVS), 157–177 (LMSVLPWVTGLTLAGILPLLF), 204–224 (LGVNGCIISGIVLGSLYGLMP), 235–255 (ASIGFWMAVLVSAGILGQWPI), 270–290 (VQVFVVILGSIAMLSQAAMAP), 291–311 (ALFILGAAGFTLYPVAMAWAC), 325–345 (ALLLSYTVGSLLGPSFTAMLM), and 348–368 (FSDNLLFIMIASVSFIYLLML).

This sequence belongs to the major facilitator superfamily. YcaD (TC 2.A.1.26) family.

The protein localises to the cell inner membrane. This is an uncharacterized protein from Escherichia coli O7:K1 (strain IAI39 / ExPEC).